The following is a 280-amino-acid chain: Homeobox protein Hox-B1b (280 aa).

A disordered region spans residues 46-65 (GRLAAPTSAPHQSPGLPLHH). The Antp-type hexapeptide signature appears at 170–175 (TFDWMK). A DNA-binding region (homeobox) is located at residues 195 to 254 (HNVIRTNFTTKQLTELEKEFHFNKYLTRARRVEVAASLELNETQVKIWFQNRRMKQKKRE). Positions 249–280 (KQKKREKLGGVLVHREKASGPESSPKAKESEP) are disordered. A compositionally biased stretch (basic and acidic residues) spans 261-280 (VHREKASGPESSPKAKESEP).

It belongs to the Antp homeobox family. Labial subfamily.

It is found in the nucleus. Its function is as follows. Sequence-specific transcription factor which is part of a developmental regulatory system that provides cells with specific positional identities on the anterior-posterior axis. The sequence is that of Homeobox protein Hox-B1b (hoxb1b) from Takifugu rubripes (Japanese pufferfish).